Consider the following 192-residue polypeptide: Pupal cuticle protein (192 aa).

The first 15 residues, 1 to 15 (MHLLMSLFGVLAVMQ), serve as a signal peptide directing secretion. A Chitin-binding type R&amp;R domain is found at 45–106 (DGNYRYAYET…PVGDHIPKVP (62 aa)). Polar residues predominate over residues 149 to 163 (QDQTTPRSRPSSTPK). Positions 149–192 (QDQTTPRSRPSSTPKTIYLTHPPTLSDAPTRRPLRQRQNDSRRR) are disordered.

Component of the cuticle of the pupa of fruit fly. This is Pupal cuticle protein (Pcp) from Drosophila pseudoobscura pseudoobscura (Fruit fly).